A 109-amino-acid chain; its full sequence is Flagellar hook-basal body complex protein FliE (109 aa).

Residues 1 to 38 form a disordered region; the sequence is MQAIHNDKSLLSPFSELNTDNRTKREESGSTFKEQKGG. The segment covering 19-38 has biased composition (basic and acidic residues); sequence TDNRTKREESGSTFKEQKGG.

The protein belongs to the FliE family.

Its subcellular location is the bacterial flagellum basal body. This is Flagellar hook-basal body complex protein FliE from Helicobacter pylori (strain P12).